Consider the following 530-residue polypeptide: AP-4 complex subunit mu (530 aa).

A disordered region spans residues 164 to 187 (PKQGVKPIHSGSKNSSSGGSSLST). The span at 173–186 (SGSKNSSSGGSSLS) shows a compositional bias: low complexity. An MHD domain is found at 227–527 (DNEIYIDLCE…ITDSKSFVSR (301 aa)).

The protein belongs to the adaptor complexes medium subunit family. May be part of the adaptor protein complex 4 (AP-4), a heterotetramer composed of two large adaptins (epsilon-type subunitand beta-type subunit), a medium adaptin (mu-type subunit) and a small adaptin (sigma-type).

The protein localises to the golgi apparatus. The protein resides in the trans-Golgi network membrane. It is found in the early endosome. Its function is as follows. Probable component of an adaptor protein complex. Adaptor protein complexes are vesicle coat components involved both in vesicle formation and cargo selection. They control the vesicular transport of proteins in different trafficking pathways. This chain is AP-4 complex subunit mu (apm4), found in Dictyostelium discoideum (Social amoeba).